Reading from the N-terminus, the 1040-residue chain is Multidrug resistance protein MdtB (1040 aa).

The next 12 helical transmembrane spans lie at 16-36 (FIMR…AGII), 347-367 (LMMA…NIPA), 369-389 (IIPG…MVFL), 396-416 (LTLM…IVVI), 440-460 (IGFT…PLLF), 472-492 (FAIT…TLTP), 537-557 (WLTL…WVFI), 863-883 (LGST…VLGI), 888-908 (FIHP…ALLA), 911-931 (IAGS…IGIV), 968-988 (ILMT…STGV), and 998-1018 (IGMV…TPVI).

It belongs to the resistance-nodulation-cell division (RND) (TC 2.A.6) family. MdtB subfamily. In terms of assembly, part of a tripartite efflux system composed of MdtA, MdtB and MdtC. MdtB forms a heteromultimer with MdtC.

It localises to the cell inner membrane. This is Multidrug resistance protein MdtB from Shigella boydii serotype 18 (strain CDC 3083-94 / BS512).